The sequence spans 601 residues: DNA ligase (601 aa).

Residue D258 participates in ATP binding. K260 (N6-AMP-lysine intermediate) is an active-site residue. R265, R280, E310, F350, R427, and K433 together coordinate ATP. The segment at 568 to 601 is disordered; that stretch reads DKSPEDATTTDEILEMYNKQPKKKIESPPIDESV.

It belongs to the ATP-dependent DNA ligase family. Mg(2+) serves as cofactor.

The catalysed reaction is ATP + (deoxyribonucleotide)n-3'-hydroxyl + 5'-phospho-(deoxyribonucleotide)m = (deoxyribonucleotide)n+m + AMP + diphosphate.. Its function is as follows. DNA ligase that seals nicks in double-stranded DNA during DNA replication, DNA recombination and DNA repair. This is DNA ligase from Saccharolobus islandicus (strain Y.G.57.14 / Yellowstone #1) (Sulfolobus islandicus).